Here is a 262-residue protein sequence, read N- to C-terminus: Glycine and serine-rich protein 1 (262 aa).

A signal peptide spans 1–21 (MVIKTSLTVLILGVLIAEVFC). An N-linked (GlcNAc...) asparagine glycan is attached at asparagine 59. The tract at residues 172–212 (SNGGWGAETGSSGGMNSQSSGSQSGSWGSSSGSWGGSSGSM) is disordered. A compositionally biased stretch (gly residues) spans 174-184 (GGWGAETGSSG). Residues 185-203 (GMNSQSSGSQSGSWGSSSG) show a composition bias toward low complexity.

Component of the acid-insoluble and acid-soluble organic matrix of calcified layers of the shell (at protein level).

It is found in the secreted. The sequence is that of Glycine and serine-rich protein 1 from Lottia gigantea (Giant owl limpet).